A 242-amino-acid polypeptide reads, in one-letter code: Small ribosomal subunit protein uS3 (242 aa).

Residues 39–110 (IRRFIHKKYG…QVRINVVEVE (72 aa)) enclose the KH type-2 domain. Residues 217–242 (TMPVGASPRRRGNRRPQQFEDRSNEG) are disordered. The span at 233–242 (QQFEDRSNEG) shows a compositional bias: basic and acidic residues.

Belongs to the universal ribosomal protein uS3 family. In terms of assembly, part of the 30S ribosomal subunit. Forms a tight complex with proteins S10 and S14.

Its function is as follows. Binds the lower part of the 30S subunit head. Binds mRNA in the 70S ribosome, positioning it for translation. This is Small ribosomal subunit protein uS3 from Prochlorococcus marinus (strain MIT 9313).